Consider the following 829-residue polypeptide: Exocyst complex component SEC10b (829 aa).

Residues 244–266 (RGLEVAVANLQDYCNELENRLLS) are a coiled coil.

This sequence belongs to the SEC10 family. The exocyst complex is composed of SEC3, SEC5, SEC6, SEC8, SEC10, EXO70A1 and EXO84B. Interacts with EXO84B. Binds to EXO70E2. As to expression, expressed in seedlings, roots, leaves and flowers.

The protein localises to the cytoplasm. Its subcellular location is the cytosol. The protein resides in the secreted. It localises to the extracellular exosome. Its function is as follows. Component of the exocyst complex involved in the docking of exocytic vesicles with fusion sites on the plasma membrane during regulated or polarized secretion. Involved in polarized cell growth and organ morphogenesis. During cytokinesis, involved in cell plate initiation, cell plate maturation and formation of new primary cell wall. This is Exocyst complex component SEC10b from Arabidopsis thaliana (Mouse-ear cress).